The chain runs to 448 residues: Serine/threonine-protein phosphatase 2A regulatory subunit B'' subunit gamma (448 aa).

EF-hand domains follow at residues 268-303 (PSALRVYGQYLNLDKDHNGMLSKEELSRYGTGTLTC) and 336-371 (KEPAALQYIFKLLDIENKGSLNVFSLNFFFRAIQEQ). Ca(2+) is bound by residues aspartate 281, aspartate 283, asparagine 285, methionine 287, and glutamate 292.

Its subcellular location is the nucleus. The protein resides in the cytoplasm. Functionally, possible role in the regulation of cell death. The chain is Serine/threonine-protein phosphatase 2A regulatory subunit B'' subunit gamma (ppp2r3c) from Xenopus tropicalis (Western clawed frog).